The following is a 136-amino-acid chain: Gonadotropin subunit beta-2 (136 aa).

The first 21 residues, 1–21 (MVCLFLGASSFIWSLAPAAAA), serve as a signal peptide directing secretion. Disulfide bonds link Cys27–Cys75, Cys41–Cys90, Cys44–Cys128, Cys52–Cys106, Cys56–Cys108, and Cys111–Cys118. N-linked (GlcNAc...) asparagine glycosylation is present at Asn31.

The protein belongs to the glycoprotein hormones subunit beta family. In terms of assembly, heterodimer of an alpha and a beta chain.

The protein localises to the secreted. In terms of biological role, involved in gametogenesis and steroidogenesis. The sequence is that of Gonadotropin subunit beta-2 (cgbb) from Fundulus heteroclitus (Killifish).